The sequence spans 154 residues: 6,7-dimethyl-8-ribityllumazine synthase (154 aa).

5-amino-6-(D-ribitylamino)uracil contacts are provided by residues Phe-22, 57-59, and 81-83; these read VCE and TVI. 86–87 lines the (2S)-2-hydroxy-3-oxobutyl phosphate pocket; the sequence is KT. Catalysis depends on His-89, which acts as the Proton donor. Position 114 (Val-114) interacts with 5-amino-6-(D-ribitylamino)uracil. A (2S)-2-hydroxy-3-oxobutyl phosphate-binding site is contributed by Arg-128.

Belongs to the DMRL synthase family. Forms an icosahedral capsid composed of 60 subunits, arranged as a dodecamer of pentamers.

The catalysed reaction is (2S)-2-hydroxy-3-oxobutyl phosphate + 5-amino-6-(D-ribitylamino)uracil = 6,7-dimethyl-8-(1-D-ribityl)lumazine + phosphate + 2 H2O + H(+). It participates in cofactor biosynthesis; riboflavin biosynthesis; riboflavin from 2-hydroxy-3-oxobutyl phosphate and 5-amino-6-(D-ribitylamino)uracil: step 1/2. In terms of biological role, catalyzes the formation of 6,7-dimethyl-8-ribityllumazine by condensation of 5-amino-6-(D-ribitylamino)uracil with 3,4-dihydroxy-2-butanone 4-phosphate. This is the penultimate step in the biosynthesis of riboflavin. The protein is 6,7-dimethyl-8-ribityllumazine synthase of Wigglesworthia glossinidia brevipalpis.